The sequence spans 218 residues: Small ribosomal subunit protein uS3c (218 aa).

A KH type-2 domain is found at 47–118 (VQKHMRVSSG…RLNIAITRVA (72 aa)).

It belongs to the universal ribosomal protein uS3 family. As to quaternary structure, part of the 30S ribosomal subunit.

It is found in the plastid. It localises to the chloroplast. This chain is Small ribosomal subunit protein uS3c (rps3), found in Illicium oligandrum (Star anise).